A 121-amino-acid polypeptide reads, in one-letter code: Large ribosomal subunit protein uL18 (121 aa).

This sequence belongs to the universal ribosomal protein uL18 family. Part of the 50S ribosomal subunit; part of the 5S rRNA/L5/L18/L25 subcomplex. Contacts the 5S and 23S rRNAs.

This is one of the proteins that bind and probably mediate the attachment of the 5S RNA into the large ribosomal subunit, where it forms part of the central protuberance. The protein is Large ribosomal subunit protein uL18 of Burkholderia multivorans (strain ATCC 17616 / 249).